A 430-amino-acid chain; its full sequence is Putative chloroquine resistance transporter (430 aa).

The interval 1–22 is disordered; it reads MLKEGSSLDLSASSSSGTLRSD. Over 1-53 the chain is Cytoplasmic; that stretch reads MLKEGSSLDLSASSSSGTLRSDNSFGNSPLDRITSLLILIYKSIRACFKWIYS. Over residues 7–21 the composition is skewed to low complexity; the sequence is SLDLSASSSSGTLRS. The helical transmembrane segment at 54 to 74 threads the bilayer; the sequence is KSFGIICILFVILDVLTTVFF. Topologically, residues 75 to 88 are vacuolar; it reads KRFIDHTKNYVMFT. Residues 89–109 traverse the membrane as a helical segment; the sequence is IQVIIFTFWIIVCCIAILCFL. At 110–122 the chain is on the cytoplasmic side; that stretch reads FNREYMKRHFNVR. A helical membrane pass occupies residues 123-143; sequence PLVFLGFLDMLSTGLSANGSA. At 144–147 the chain is on the vacuolar side; it reads HTSG. A helical membrane pass occupies residues 148 to 168; sequence LMLVLLGQISVPLTMVSCKLI. The Cytoplasmic segment spans residues 169-173; that stretch reads LSKKY. A helical transmembrane segment spans residues 174 to 194; sequence HHYQYISSAIILTFAVLKPIL. N-linked (GlcNAc...) asparagine glycosylation is present at asparagine 195. Residues 195–206 lie on the Vacuolar side of the membrane; it reads NRTDTTDNRFYN. A helical transmembrane segment spans residues 207-223; the sequence is NMLYLLASVPDSIASAL. The Cytoplasmic portion of the chain corresponds to 224–239; that stretch reads REKQYTSKFFHVVKYQ. The chain crosses the membrane as a helical span at residues 240-260; the sequence is FFGFLFHFFYNILYTLLFTLP. Over 261–306 the chain is Vacuolar; the sequence is FNSVKGYFDSLYKLCVNGYKCIFFGVNTITENCGPTLIPTCDNCLE. Disulfide bonds link cysteine 281–cysteine 304 and cysteine 293–cysteine 301. Residues 307–329 traverse the membrane as a helical segment; the sequence is AFKIYCLYILFSSAIRVAYVFIM. Residues 330–335 lie on the Cytoplasmic side of the membrane; it reads LDGSVT. The chain crosses the membrane as a helical span at residues 336-358; that stretch reads FTLLLGTVKVPLTSIAFSLRFIA. At 359–364 the chain is on the vacuolar side; sequence GDSTTS. Residues 365 to 385 traverse the membrane as a helical segment; that stretch reads FNLLDVVCFLGIVAGLLLYAL. Residues 386-430 are Cytoplasmic-facing; sequence GSKKIQEETDLLESPLIDDAESEHELLSTGTEKLMRSEICHDLFT.

This sequence belongs to the CRT-like transporter family.

The protein localises to the vacuole membrane. In terms of biological role, nutrient transporter. Involved in maintaining the osmotic homeostasis of the digestive vacuole. This Theileria annulata protein is Putative chloroquine resistance transporter.